Reading from the N-terminus, the 209-residue chain is Uracil phosphoribosyltransferase (209 aa).

Residues Arg79, Arg104, and 131–139 (DPMLATGGS) contribute to the 5-phospho-alpha-D-ribose 1-diphosphate site. Uracil contacts are provided by residues Ile194 and 199-201 (GDA). Asp200 contributes to the 5-phospho-alpha-D-ribose 1-diphosphate binding site.

The protein belongs to the UPRTase family. The cofactor is Mg(2+).

The catalysed reaction is UMP + diphosphate = 5-phospho-alpha-D-ribose 1-diphosphate + uracil. The protein operates within pyrimidine metabolism; UMP biosynthesis via salvage pathway; UMP from uracil: step 1/1. With respect to regulation, allosterically activated by GTP. Its function is as follows. Catalyzes the conversion of uracil and 5-phospho-alpha-D-ribose 1-diphosphate (PRPP) to UMP and diphosphate. The protein is Uracil phosphoribosyltransferase of Clostridium tetani (strain Massachusetts / E88).